We begin with the raw amino-acid sequence, 479 residues long: Glutamate receptor U1 (479 aa).

The first 17 residues, 1–17, serve as a signal peptide directing secretion; that stretch reads MEKSLLFLFAVTLLSVG. Topologically, residues 18–163 are extracellular; sequence CTDAGESKGS…LFGFLTPFSK (146 aa). A glycan (N-linked (GlcNAc...) asparagine) is linked at Asn79. A helical transmembrane segment spans residues 164 to 184; that stretch reads ETWIGILVAYMVTSLCLFLVG. Residues 185–229 lie on the Cytoplasmic side of the membrane; sequence RLSPCEWTELSTEQNNFTFLNSLWFGAGAFTLQGAEPHPKSVSAR. A helical transmembrane segment spans residues 230–250; it reads IIAVIWWIFSIVLVAAYIASF. Topologically, residues 251–414 are extracellular; that stretch reads AAFLNSDSVQ…AGWNPVQPHT (164 aa). Asn282 carries an N-linked (GlcNAc...) asparagine glycan. A helical membrane pass occupies residues 415 to 435; it reads LGGIFLILGIGLALGVIAALI. Topologically, residues 436–479 are cytoplasmic; sequence ELVLKARNNADQQKKSCCSAFSEEMGERLGTNKENQGAVDSVKS.

This sequence belongs to the glutamate-gated ion channel (TC 1.A.10.1) family. Homomeric.

The protein resides in the cell membrane. The protein localises to the postsynaptic cell membrane. Receptor for glutamate. L-glutamate acts as an excitatory neurotransmitter at many synapses in the central nervous system. The postsynaptic actions of Glu are mediated by a variety of receptors that are named according to their selective agonists. This receptor binds domoate &gt; kainate &gt; AMPA &gt; NBQX &gt; glutamate. This chain is Glutamate receptor U1 (kbp), found in Xenopus laevis (African clawed frog).